The following is a 507-amino-acid chain: ATP synthase subunit alpha, chloroplastic (507 aa).

170 to 177 (GDRQTGKT) lines the ATP pocket.

Belongs to the ATPase alpha/beta chains family. F-type ATPases have 2 components, CF(1) - the catalytic core - and CF(0) - the membrane proton channel. CF(1) has five subunits: alpha(3), beta(3), gamma(1), delta(1), epsilon(1). CF(0) has four main subunits: a, b, b' and c.

It is found in the plastid. The protein resides in the chloroplast thylakoid membrane. It carries out the reaction ATP + H2O + 4 H(+)(in) = ADP + phosphate + 5 H(+)(out). In terms of biological role, produces ATP from ADP in the presence of a proton gradient across the membrane. The alpha chain is a regulatory subunit. The polypeptide is ATP synthase subunit alpha, chloroplastic (Morus indica (Mulberry)).